The chain runs to 454 residues: UDP-N-acetylmuramoylalanine--D-glutamate ligase (454 aa).

118–124 (GTNGKTT) lines the ATP pocket.

Belongs to the MurCDEF family.

It is found in the cytoplasm. The catalysed reaction is UDP-N-acetyl-alpha-D-muramoyl-L-alanine + D-glutamate + ATP = UDP-N-acetyl-alpha-D-muramoyl-L-alanyl-D-glutamate + ADP + phosphate + H(+). The protein operates within cell wall biogenesis; peptidoglycan biosynthesis. In terms of biological role, cell wall formation. Catalyzes the addition of glutamate to the nucleotide precursor UDP-N-acetylmuramoyl-L-alanine (UMA). In Thermosynechococcus vestitus (strain NIES-2133 / IAM M-273 / BP-1), this protein is UDP-N-acetylmuramoylalanine--D-glutamate ligase.